Here is a 193-residue protein sequence, read N- to C-terminus: Protein SPEAR3 (193 aa).

Disordered regions lie at residues 1–50 (MGSS…GVAQ) and 85–104 (GYPS…SSPP). Positions 14–26 (SSSSSPTSSSSSP) are enriched in low complexity. Residues 44–52 (RGLGVAQLE) carry the SPL motif. Residues 86–101 (YPSIPSSSPSFSYASS) show a composition bias toward low complexity. Residues 187 to 193 (LDLELRL) carry the EAR motif.

In terms of assembly, interacts with TPL and the TPR corepressors TPR1, TPR2, TPR3, TPR4, and with the TCP transcription factors TCP2, TCP3, TCP4, TCP5, TCP10, TCP13, TCP17 and TCP24. Interacts with SPL and SPEAR2. As to expression, expressed in shoot apical meristem, cotyledons and leaves. Detected at the leaf margins and in the vascular bundles at the base of the leaves.

It localises to the nucleus. Its function is as follows. Transcriptional regulator of leaf development. Acts as an adapter-like transcriptional repressor recruiting TPL/TPR corepressors to inhibit the CIN-like TCP transcription factors. The chain is Protein SPEAR3 from Arabidopsis thaliana (Mouse-ear cress).